Reading from the N-terminus, the 138-residue chain is Actophorin (138 aa).

The ADF-H domain maps to 3-134; sequence GIQLADEVTS…NLDEVIAKVK (132 aa).

The protein belongs to the actin-binding proteins ADF family. In terms of assembly, interacts with F-actin. Does not interact with G-actin. Interacts with 14-3-3 protein 3.

The protein localises to the cytoplasm. It is found in the cytoskeleton. Its subcellular location is the cell membrane. The protein resides in the cell projection. It localises to the phagocytic cup. The protein localises to the pseudopodium. Actin-binding protein that severs actin filaments. The sequence is that of Actophorin from Entamoeba histolytica (strain ATCC 30459 / HM-1:IMSS / ABRM).